The chain runs to 173 residues: Cytochrome c-type biogenesis protein CcmE (173 aa).

Residues Met1 to Arg8 are Cytoplasmic-facing. A helical; Signal-anchor for type II membrane protein transmembrane segment spans residues Phe9–Ala29. At Leu30–Lys173 the chain is on the periplasmic side. Residues His131 and Tyr135 each coordinate heme. Positions Gly152–Lys173 are disordered. The segment covering Ala156–Lys173 has biased composition (basic and acidic residues).

The protein belongs to the CcmE/CycJ family.

It is found in the cell inner membrane. Functionally, heme chaperone required for the biogenesis of c-type cytochromes. Transiently binds heme delivered by CcmC and transfers the heme to apo-cytochromes in a process facilitated by CcmF and CcmH. The chain is Cytochrome c-type biogenesis protein CcmE from Haemophilus influenzae (strain ATCC 51907 / DSM 11121 / KW20 / Rd).